A 542-amino-acid chain; its full sequence is Serine/threonine-protein phosphatase 2A regulatory subunit pptr-1 (542 aa).

2 disordered regions span residues 1-28 (MHGS…TGGQ) and 500-542 (DYLK…PAKK). A compositionally biased stretch (polar residues) spans 528-542 (KKSSTGSETTTPAKK).

This sequence belongs to the phosphatase 2A regulatory subunit B56 family. Part of a complex consisting of a common heterodimeric core enzyme, composed of catalytic subunit let-92 and constant regulatory subunit paa-1, that associates with a variety of regulatory subunits which confer distinct properties to the holoenzyme. Interacts with akt-1 but not akt-2. Interacts with sgk-1. Interacts with P granule components meg-1, meg-3 and meg-4. Expressed in pharynx, vulva and spermatheca.

It is found in the cytoplasm. Its function is as follows. Probable regulatory subunit of serine/threonine-protein phosphatase let-92 which negatively regulates the insulin receptor signaling cascade composed of daf-2, age-1, akt-1, akt-2 and sgk-1 by promoting the dephosphorylation of akt-1 on 'Thr-350'. Negatively regulates several functions controlled by the insulin pathway including dauer formation, lifespan, fat storage and stress resistance. Plays a role in the asymmetric segregation of the P granule components during embryonic cell divisions but does not play an essential role in specifying germ cell fate. Within a PP2A phosphatase complex, acts redundantly with pptr-2, to dephosphorylate P granule components including meg-1 and meg-3 to promote the assembly and accumulation of zygotic P granules in the posterior cytoplasm during zygote polarization, and thus maintain P granule distribution and segregation in early stage embryos following meiosis. In adults, required to promote germ cell proliferation and differentiation when exposed to thermic stress. The polypeptide is Serine/threonine-protein phosphatase 2A regulatory subunit pptr-1 (Caenorhabditis elegans).